We begin with the raw amino-acid sequence, 123 residues long: Small ribosomal subunit protein uS12 (123 aa).

Residues 1–29 (MPTINQLIRKKRQSSASRKKSPALQKCPQ) are disordered. The span at 8-21 (IRKKRQSSASRKKS) shows a compositional bias: basic residues. D89 carries the 3-methylthioaspartic acid modification.

The protein belongs to the universal ribosomal protein uS12 family. As to quaternary structure, part of the 30S ribosomal subunit. Contacts proteins S8 and S17. May interact with IF1 in the 30S initiation complex.

Its function is as follows. With S4 and S5 plays an important role in translational accuracy. Functionally, interacts with and stabilizes bases of the 16S rRNA that are involved in tRNA selection in the A site and with the mRNA backbone. Located at the interface of the 30S and 50S subunits, it traverses the body of the 30S subunit contacting proteins on the other side and probably holding the rRNA structure together. The combined cluster of proteins S8, S12 and S17 appears to hold together the shoulder and platform of the 30S subunit. The sequence is that of Small ribosomal subunit protein uS12 from Chlamydia abortus (strain DSM 27085 / S26/3) (Chlamydophila abortus).